The sequence spans 149 residues: Calmodulin-1 (149 aa).

The residue at position 2 (Ala2) is an N-acetylalanine. 4 consecutive EF-hand domains span residues 8–43, 44–79, 81–116, and 117–149; these read DQIA…LGQN, PTEA…KMKD, DSEE…LGEK, and LTDE…MMAK. Residues Asp21, Asp23, Asp25, Cys27, Glu32, Asp57, Asp59, Asn61, Thr63, Glu68, Asp94, Asp96, Asn98, and Glu105 each coordinate Ca(2+). Lys116 carries the post-translational modification N6,N6,N6-trimethyllysine. Asp130, Asp132, Asp134, Gln136, and Glu141 together coordinate Ca(2+).

Belongs to the calmodulin family.

Its function is as follows. Calmodulin mediates the control of a large number of enzymes, ion channels and other proteins by Ca(2+). Among the enzymes to be stimulated by the calmodulin-Ca(2+) complex are a number of protein kinases and phosphatases. This Oryza sativa subsp. indica (Rice) protein is Calmodulin-1 (CAM1-1).